The chain runs to 152 residues: Cornifin-A (152 aa).

A disordered region spans residues 20 to 40 (EVKQPCQPPPQEPCAPKTKEP). Tandem repeats lie at residues 27-34 (PPPQEPCA), 35-42 (PKTKEPCH), 43-49 (PIPEPCN), 50-57 (PKVPEPCQ), 58-65 (PKVPEPCQ), 66-73 (PKVPEPCQ), 74-81 (PKVPEPCQ), 82-89 (PKVPEPCQ), 90-97 (PKVPEPCQ), 98-105 (PKVPEPCH), 106-113 (PKAPEPCH), 114-121 (PVVPEPCQ), 122-129 (PVAPEPCQ), and 130-137 (PVVPEPCP). Residues 27-137 (PPPQEPCAPK…CQPVVPEPCP (111 aa)) form a 14 X 8 AA approximate tandem repeats region.

The protein belongs to the cornifin (SPRR) family. In squamous epithelia lining the nasal vestibule and in the hard palate.

It is found in the cytoplasm. In terms of biological role, cross-linked envelope protein of keratinocytes. It is a keratinocyte protein that first appears in the cell cytosol, but ultimately becomes cross-linked to membrane proteins by transglutaminase. All that results in the formation of an insoluble envelope beneath the plasma membrane. The chain is Cornifin-A (Sprr1a) from Rattus norvegicus (Rat).